The sequence spans 283 residues: Probable endonuclease 4 (283 aa).

Zn(2+) contacts are provided by His69, His109, Glu145, Asp179, His182, His216, Asp229, His231, and Glu261.

Belongs to the AP endonuclease 2 family. Zn(2+) serves as cofactor.

It carries out the reaction Endonucleolytic cleavage to 5'-phosphooligonucleotide end-products.. In terms of biological role, endonuclease IV plays a role in DNA repair. It cleaves phosphodiester bonds at apurinic or apyrimidinic (AP) sites, generating a 3'-hydroxyl group and a 5'-terminal sugar phosphate. The protein is Probable endonuclease 4 of Prosthecochloris aestuarii (strain DSM 271 / SK 413).